Reading from the N-terminus, the 233-residue chain is Hydroxyacylglutathione hydrolase (233 aa).

The Zn(2+) site is built by H52, H54, D56, H57, H108, D125, and H163.

Belongs to the metallo-beta-lactamase superfamily. Glyoxalase II family. As to quaternary structure, monomer. Requires Zn(2+) as cofactor.

It carries out the reaction an S-(2-hydroxyacyl)glutathione + H2O = a 2-hydroxy carboxylate + glutathione + H(+). It functions in the pathway secondary metabolite metabolism; methylglyoxal degradation; (R)-lactate from methylglyoxal: step 2/2. Functionally, thiolesterase that catalyzes the hydrolysis of S-D-lactoyl-glutathione to form glutathione and D-lactic acid. The chain is Hydroxyacylglutathione hydrolase from Histophilus somni (strain 129Pt) (Haemophilus somnus).